The sequence spans 83 residues: Bublin coiled-coil protein (83 aa).

Residues 1-25 (MSGPNGDLGTPVEAGAEGEEDGFGE) are disordered. A coiled-coil region spans residues 25-74 (EAEYAAINSMLDQINSCLDHLEEKNDHLHARLQELLESNRQTRLEFQQQL). Ser82 is modified (phosphoserine).

It belongs to the UPF0184 (EST00098) family.

The protein localises to the cell junction. It is found in the cytoplasm. The protein resides in the cytoskeleton. Its function is as follows. Essential for intermediate filament organization in intestinal cells, interacts with intermediate filament and regulates intestinal lumen morphology. This is Bublin coiled-coil protein (BBLN) from Bos taurus (Bovine).